A 616-amino-acid polypeptide reads, in one-letter code: Cleavage stimulation factor subunit 2 tau variant (616 aa).

In terms of domain architecture, RRM spans 16–94 (RSVFVGNIPY…RALRVDNAAS (79 aa)). 2 disordered regions span residues 203–241 (GKSQ…QPQH) and 262–418 (IPAP…SRAM). 2 stretches are compositionally biased toward low complexity: residues 223-233 (PGPNVLLNQQN) and 319-331 (VTPG…GLLG). The residue at position 320 (threonine 320) is a Phosphothreonine. Residues 368–381 (SGHDTRGPSSHEMR) show a composition bias toward basic and acidic residues. A 1-1 repeat occupies 418–422 (METRA). Residues 418–462 (METRAMETEVLETRVMERRGMETCAMETRGMEARGMDARGLEMRG) are 9 X 5 AA tandem repeats of M-E-T-R-[AG]. Residues 423-427 (METEV) form a 1-2; approximate repeat. The 1-3; approximate repeat unit spans residues 428–432 (LETRV). One copy of the 1-4; approximate repeat lies at 433–437 (MERRG). Residues 438-442 (METCA) form a 1-5; approximate repeat. Residues 443 to 447 (METRG) form a 1-6 repeat. One copy of the 1-7; approximate repeat lies at 448–452 (MEARG). The 1-8; approximate repeat unit spans residues 453–457 (MDARG). The stretch at 458-462 (LEMRG) is one 1-9; approximate repeat. 4 consecutive repeat copies span residues 505 to 509 (GAGMQ), 510 to 514 (GTGIQ), 515 to 519 (GTGMQ), and 520 to 524 (GAGIQ). A 9 X 5 AA tandem repeats of G-[AT]-G-[MI]-Q region spans residues 505–549 (GAGMQGTGIQGTGMQGAGIQGGGMQGAGIQGVSIQGGGIQGGGIQ). The stretch at 525–529 (GGGMQ) is one 2-5; approximate repeat. One copy of the 2-6 repeat lies at 530–534 (GAGIQ). One copy of the 2-7; approximate repeat lies at 535–539 (GVSIQ). One copy of the 2-8; approximate repeat lies at 540–544 (GGGIQ). The tract at residues 542-573 (GIQGGGIQGASKQGGSQPSSFSPGQSQVTPQD) is disordered. A 2-9; approximate repeat occupies 545–549 (GGGIQ). The span at 550-568 (GASKQGGSQPSSFSPGQSQ) shows a compositional bias: low complexity. A Phosphoserine modification is found at serine 563.

Its subcellular location is the nucleus. In terms of biological role, may play a significant role in AAUAAA-independent mRNA polyadenylation in germ cells. Directly involved in the binding to pre-mRNAs. In Homo sapiens (Human), this protein is Cleavage stimulation factor subunit 2 tau variant (CSTF2T).